Consider the following 367-residue polypeptide: Mitochondrial GTPase 1 (367 aa).

Positions 42–228 (LKTFEKLLPQ…LIDTPGIGVP (187 aa)) constitute a CP-type G domain. Residues 89–92 (TRKD), 160–165 (NVGKST), and Gly224 each bind GTP.

The protein belongs to the TRAFAC class YlqF/YawG GTPase family. MTG1 subfamily.

Its subcellular location is the mitochondrion inner membrane. Functionally, mitochondrial GTPase involved in assembly of the large ribosomal subunit. Plays a role in expression of the mitochondrial translational machinery. The chain is Mitochondrial GTPase 1 (MTG1) from Saccharomyces cerevisiae (strain ATCC 204508 / S288c) (Baker's yeast).